The sequence spans 246 residues: 33kDa venom protein (246 aa).

The first 20 residues, 1-20, serve as a signal peptide directing secretion; the sequence is MAGKEVIFIMALFIAVESSP. Repeat copies occupy residues 83–96, 97–110, 111–124, 125–138, 139–152, 153–166, and 167–180. The 12 X approximate tandem repeats of [AV][DE]X[VL]SGSX[DE]QX[KR]X[ST] stretch occupies residues 83–243; sequence GGAVSESVKQ…SGSVGNDDDI (161 aa). The segment at 88–246 is disordered; it reads ESVKQKRETA…VGNDDDISVQ (159 aa). Residues 112–123 are compositionally biased toward polar residues; it reads ENLSGSFDQQKS. The segment covering 175-186 has biased composition (basic and acidic residues); that stretch reads DKQKVTVEEKSE. Residues 181–187 form an 8; half-length repeat; that stretch reads VEEKSEP. A run of 4 repeats spans residues 188–201, 202–215, 216–229, and 230–243. The segment covering 217–228 has biased composition (polar residues); it reads ESLSGSFDQQKS.

As to expression, expressed by the venom gland.

It localises to the secreted. This is 33kDa venom protein from Chelonus sp. nr. curvimaculatus (Parasitic wasp).